The following is a 1390-amino-acid chain: ABC transporter G family member 43 (1390 aa).

The disordered stretch occupies residues 1-22 (MTMPQTDGVEFASRNNLENGDG). The ABC transporter 1 domain maps to 137 to 411 (SKLSRFTFSK…FEDCGFKCPQ (275 aa)). 171 to 178 (GPPGCGKT) contacts ATP. Residues 489–701 (DMFKACSRRE…AEIGLTSNEF (213 aa)) form the ABC transmembrane type-2 1 domain. Helical transmembrane passes span 507–527 (FVYVFKSGLLIFIGSIAMTVY), 541–561 (YLLGSLFFSLIKLLADGLPEL), 594–614 (IPISFLESFLWTMLTYYVIGY), 626–646 (LILFALHLSCISMFRAIGAVF), 651–671 (VATTIGSISIVLLSVFGGFIV), and 737–757 (FGALIGFTLFFNTVFALALTF). One can recognise an ABC transporter 2 domain in the interval 798–1043 (FTFQDVQYFI…VIEYFMSIPG (246 aa)). ATP is bound at residue 835 to 842 (GVSGAGKT). The ABC transmembrane type-2 2 domain maps to 1115 to 1329 (EQFKACLWKQ…VLNGLLTSQY (215 aa)). 7 consecutive transmembrane segments (helical) span residues 1134–1154 (YNLTRIIFMCFTCMLCGILFL), 1173–1193 (MFTVVLFSGINNCSTVIFCVA), 1218–1238 (VLVEIPYSLFQSIIYVIIVYP), 1253–1273 (FYSIFCSLLIFNYFGMLLVVV), 1279–1299 (IAFTLRSSFYAIVNLFAGYVM), 1307–1327 (WWIWMYYLSPTSWVLNGLLTS), and 1362–1382 (LVAVVLIAFPILLASLFAFFI).

The protein belongs to the ABC transporter superfamily. ABCG family. PDR (TC 3.A.1.205) subfamily.

It localises to the membrane. Functionally, may be a general defense protein. This Arabidopsis thaliana (Mouse-ear cress) protein is ABC transporter G family member 43 (ABCG43).